A 392-amino-acid polypeptide reads, in one-letter code: MAKRDYYEVLGIDKSASENDIKKAYRKAAMKYHPDKFANASDAEKKDAEEKFKEINEAYQILSDSQKKQQYDQFGHAAFEQGGAGFGGGFNAGGFDFGDIFGDIFGGGGFGGFEGFSGFGGSSRRSYVEPGNDLRYNLEITLEEAAKGVEKTIKYKRTGKCENCHGTGGEDDKMKTCPTCNGQGTIRTQQRTILGVMQSQSVCPDCHGTGKVPEKKCKHCHGTGTAKETVEKKVNVPAGIDDGQKLKYAGLGEASQNGGPNGDLYVVIRIKSHDIFVRDGENLYCEVPISYSTAVLGGEVEIPTLNGKKMIKVPEGTESGKLLKVKGEGIKSLRGYGQGDIIVKITIETPKKLTDKQKELLQKFEESLNEKNYEQKSSFMKKVKKFFKDIID.

One can recognise a J domain in the interval 5 to 75; it reads DYYEVLGIDK…QKKQQYDQFG (71 aa). The segment at 148-229 adopts a CR-type zinc-finger fold; the sequence is GVEKTIKYKR…CHGTGTAKET (82 aa). Zn(2+) contacts are provided by Cys-161, Cys-164, Cys-177, Cys-180, Cys-203, Cys-206, Cys-217, and Cys-220. CXXCXGXG motif repeat units lie at residues 161 to 168, 177 to 184, 203 to 210, and 217 to 224; these read CENCHGTG, CPTCNGQG, CPDCHGTG, and CKHCHGTG.

The protein belongs to the DnaJ family. In terms of assembly, homodimer. It depends on Zn(2+) as a cofactor.

It is found in the cytoplasm. In terms of biological role, participates actively in the response to hyperosmotic and heat shock by preventing the aggregation of stress-denatured proteins and by disaggregating proteins, also in an autonomous, DnaK-independent fashion. Unfolded proteins bind initially to DnaJ; upon interaction with the DnaJ-bound protein, DnaK hydrolyzes its bound ATP, resulting in the formation of a stable complex. GrpE releases ADP from DnaK; ATP binding to DnaK triggers the release of the substrate protein, thus completing the reaction cycle. Several rounds of ATP-dependent interactions between DnaJ, DnaK and GrpE are required for fully efficient folding. Also involved, together with DnaK and GrpE, in the DNA replication of plasmids through activation of initiation proteins. The polypeptide is Chaperone protein DnaJ (Fusobacterium nucleatum subsp. nucleatum (strain ATCC 25586 / DSM 15643 / BCRC 10681 / CIP 101130 / JCM 8532 / KCTC 2640 / LMG 13131 / VPI 4355)).